Consider the following 299-residue polypeptide: MLDNTRLRIAIQKSGRLSDDSRELLARCGIKINLHTQRLIALAENMPIDILRVRDDDIPGLVMDGVVDLGIIGENVLEEELLTRRAQGEDPRYFTLRRLDFGGCRLSLAMAVDEAWDGPAALNGKRIATSYPHLLKRYLDQKGVQFKSCLLNGSVEVAPRAGLADAICDLVSTGATLEANGLREVEVIYRSKACLIQRDGEMPEAKQQLIDRLLTRIQGVIQARESKYIMMHAPTERLDEVIALLPGAERPTILPLAGDQQRVAMHMVSSETLFWETMEKLKALGASSILVLPIEKMME.

This sequence belongs to the ATP phosphoribosyltransferase family. Long subfamily. Equilibrium between an active dimeric form, an inactive hexameric form and higher aggregates. Interconversion between the various forms is largely reversible and is influenced by the natural substrates and inhibitors of the enzyme. The cofactor is Mg(2+).

It is found in the cytoplasm. The enzyme catalyses 1-(5-phospho-beta-D-ribosyl)-ATP + diphosphate = 5-phospho-alpha-D-ribose 1-diphosphate + ATP. It participates in amino-acid biosynthesis; L-histidine biosynthesis; L-histidine from 5-phospho-alpha-D-ribose 1-diphosphate: step 1/9. Its activity is regulated as follows. Feedback inhibited by histidine. Functionally, catalyzes the condensation of ATP and 5-phosphoribose 1-diphosphate to form N'-(5'-phosphoribosyl)-ATP (PR-ATP). Has a crucial role in the pathway because the rate of histidine biosynthesis seems to be controlled primarily by regulation of HisG enzymatic activity. In Enterobacter sp. (strain 638), this protein is ATP phosphoribosyltransferase.